We begin with the raw amino-acid sequence, 342 residues long: N-acetyl-gamma-glutamyl-phosphate reductase (342 aa).

Residue C156 is part of the active site.

This sequence belongs to the NAGSA dehydrogenase family. Type 1 subfamily.

Its subcellular location is the cytoplasm. The enzyme catalyses N-acetyl-L-glutamate 5-semialdehyde + phosphate + NADP(+) = N-acetyl-L-glutamyl 5-phosphate + NADPH + H(+). It participates in amino-acid biosynthesis; L-arginine biosynthesis; N(2)-acetyl-L-ornithine from L-glutamate: step 3/4. In terms of biological role, catalyzes the NADPH-dependent reduction of N-acetyl-5-glutamyl phosphate to yield N-acetyl-L-glutamate 5-semialdehyde. The chain is N-acetyl-gamma-glutamyl-phosphate reductase from Pseudoalteromonas atlantica (strain T6c / ATCC BAA-1087).